The following is a 1298-amino-acid chain: Ras guanine nucleotide exchange factor Q (1298 aa).

Disordered regions lie at residues 1–26 (MDIN…INNF), 46–88 (NNNI…SIEG), 211–271 (NISN…GPLK), 314–384 (YTPP…QQQQ), and 459–533 (LSNG…STTT). 2 stretches are compositionally biased toward low complexity: residues 211–245 (NISN…NSNN) and 315–384 (TPPS…QQQQ). Positions 352 to 389 (SSLNANNNTNNNNQQLQQQQQQQQQQQLQQQQQLTKSY) form a coiled coil. Residues 473 to 482 (LHLSTESTTS) are compositionally biased toward polar residues. Composition is skewed to low complexity over residues 483–501 (NNNN…NNNN) and 508–533 (TTNS…STTT). The N-terminal Ras-GEF domain occupies 550–689 (DKDEVIAGER…YLKKAINDSG (140 aa)). One can recognise a DEP domain in the interval 723-801 (MSQSLQLKER…SSSSTTTTTT (79 aa)). Disordered regions lie at residues 781–864 (SKSG…PNSI) and 884–920 (GIAN…SNSF). The segment covering 783 to 864 (SGSSFSPSSS…ITSTSLPNSI (82 aa)) has biased composition (low complexity). The Ras-GEF domain occupies 964-1193 (HPVEIARQLT…YKASHMIEQP (230 aa)). Residues 1214 to 1267 (TTTTTNNLNNNNNNNNPNNNNNNNNNSANNKSSPSPSPSSSPITSSPISSLTIN) are disordered.

Functionally, promotes the exchange of Ras-bound GDP by GTP. Seems to play a role in chemotaxis. In Dictyostelium discoideum (Social amoeba), this protein is Ras guanine nucleotide exchange factor Q (gefQ).